Here is a 388-residue protein sequence, read N- to C-terminus: Protein RecA (388 aa).

79-86 is a binding site for ATP; that stretch reads GPESSGKT. Residues 347–372 form a disordered region; sequence IDGEEVSEQDTENKKDEPKKEEAVNE. Residues 357–369 are compositionally biased toward basic and acidic residues; it reads TENKKDEPKKEEA.

It belongs to the RecA family.

It is found in the cytoplasm. In terms of biological role, can catalyze the hydrolysis of ATP in the presence of single-stranded DNA, the ATP-dependent uptake of single-stranded DNA by duplex DNA, and the ATP-dependent hybridization of homologous single-stranded DNAs. It interacts with LexA causing its activation and leading to its autocatalytic cleavage. The protein is Protein RecA of Streptococcus pneumoniae (strain CGSP14).